Consider the following 219-residue polypeptide: Regulator of rDNA transcription 14 (219 aa).

A compositionally biased stretch (basic and acidic residues) spans 153-176 (EVRRRKSYRDEEREEAEFRSEVEK). Residues 153–219 (EVRRRKSYRD…KEEEEDQFSE (67 aa)) are disordered. Positions 194-219 (SDDEDDEEEDESDGFDKEEEEDQFSE) are enriched in acidic residues.

It belongs to the RRT14 family.

The protein resides in the nucleus. Its subcellular location is the nucleolus. Functionally, involved in ribosome biogenesis, probably through modulation of rDNA transcription. This is Regulator of rDNA transcription 14 (RRT14) from Komagataella phaffii (strain GS115 / ATCC 20864) (Yeast).